The primary structure comprises 361 residues: tRNA-specific 2-thiouridylase MnmA (361 aa).

Residues 8 to 15 (GMSGGVDS) and M34 contribute to the ATP site. The interval 94-96 (NPD) is interaction with target base in tRNA. The Nucleophile role is filled by C99. A disulfide bridge links C99 with C195. Residue G123 coordinates ATP. Residues 145–147 (KDQ) form an interaction with tRNA region. C195 acts as the Cysteine persulfide intermediate in catalysis. The segment at 307-308 (RY) is interaction with tRNA.

This sequence belongs to the MnmA/TRMU family.

Its subcellular location is the cytoplasm. It carries out the reaction S-sulfanyl-L-cysteinyl-[protein] + uridine(34) in tRNA + AH2 + ATP = 2-thiouridine(34) in tRNA + L-cysteinyl-[protein] + A + AMP + diphosphate + H(+). Catalyzes the 2-thiolation of uridine at the wobble position (U34) of tRNA, leading to the formation of s(2)U34. The sequence is that of tRNA-specific 2-thiouridylase MnmA from Legionella pneumophila (strain Paris).